Reading from the N-terminus, the 512-residue chain is Cytochrome P450 monooxygenase astD (512 aa).

The chain crosses the membrane as a helical span at residues 19–39 (MGISILVMLSTFLALGTIFVY). N-linked (GlcNAc...) asparagine glycans are attached at residues asparagine 191 and asparagine 413. A heme-binding site is contributed by cysteine 449.

Belongs to the cytochrome P450 family. It depends on heme as a cofactor.

The protein resides in the membrane. The protein operates within secondary metabolite biosynthesis; terpenoid biosynthesis. Its function is as follows. Cytochrome P450 monooxygenase; part of the gene cluster that mediates the biosynthesis of astellolides, drimane-type sesquiterpene esters that show antimicrobial, anti-inflammatory, and anti-tumor activities. The first step in astellolide biosynthesis is performed by the sesquiterpene cyclase astC that catalyzes the formation of drimanyl pyrophosphate from farnesyl pyrophosphate. Drimanyl pyrophosphate is then dephosphorylated by the sesquiterpene phosphatase astI to produce drimanyl monophosphate which is further dephosphorylated to drim-8-ene-11-ol by atsK. Drim-8-ene-11-ol is converted to confertifolin, probably by the cytochrome P450 monooxygenase astD and/or the dehydrogenase astE. The cytochrome P450 monooxygenases astB, astF and astJ then hydroxylate confertifolin at C6, C14, or C15 to form trihydroxy confertifolin. The nonribosomal peptide synthetase astA catalyzes ester bond formation between trihydroxy contifolin and benzoic acid (BA) or 4-hydroxy benzoic acid (4HBA), leading to the formation of dideacetyl astellolides A and B, respectively. Finally, the O-acetyltransferase astG converts dideacetyl astellolides A and B into deacetyl astellolides A and B. This Aspergillus oryzae (strain ATCC 42149 / RIB 40) (Yellow koji mold) protein is Cytochrome P450 monooxygenase astD.